A 405-amino-acid chain; its full sequence is L-carnitine CoA-transferase (405 aa).

CoA-binding residues include K97 and R104. Catalysis depends on D169, which acts as the Nucleophile.

It belongs to the CoA-transferase III family. CaiB subfamily. Homodimer.

The protein localises to the cytoplasm. It carries out the reaction crotonobetainyl-CoA + (R)-carnitine = crotonobetaine + (R)-carnitinyl-CoA. It catalyses the reaction 4-(trimethylamino)butanoyl-CoA + (R)-carnitine = (R)-carnitinyl-CoA + 4-(trimethylamino)butanoate. It participates in amine and polyamine metabolism; carnitine metabolism. Functionally, catalyzes the reversible transfer of the CoA moiety from gamma-butyrobetainyl-CoA to L-carnitine to generate L-carnitinyl-CoA and gamma-butyrobetaine. Is also able to catalyze the reversible transfer of the CoA moiety from gamma-butyrobetainyl-CoA or L-carnitinyl-CoA to crotonobetaine to generate crotonobetainyl-CoA. The polypeptide is L-carnitine CoA-transferase (caiB) (Salmonella typhi).